Here is a 326-residue protein sequence, read N- to C-terminus: Isopenicillin N synthase (326 aa).

Isopenicillin N-binding residues include R84, Y88, and Y186. N-[(5S)-5-amino-5-carboxypentanoyl]-L-cysteinyl-D-valine contacts are provided by R84, Y88, Y186, H209, and D211. Residues L183 to L283 enclose the Fe2OG dioxygenase domain. Fe(2+) contacts are provided by H209, D211, and H265. Residue R274 participates in 2-oxoglutarate binding. Position 276 (S276) interacts with isopenicillin N. S276 serves as a coordination point for N-[(5S)-5-amino-5-carboxypentanoyl]-L-cysteinyl-D-valine.

It belongs to the iron/ascorbate-dependent oxidoreductase family. The cofactor is Fe cation. L-ascorbate serves as cofactor.

The enzyme catalyses N-[(5S)-5-amino-5-carboxypentanoyl]-L-cysteinyl-D-valine + O2 = isopenicillin N + 2 H2O. It functions in the pathway antibiotic biosynthesis; penicillin G biosynthesis; penicillin G from L-alpha-aminoadipate and L-cysteine and L-valine: step 2/3. Removes, in the presence of oxygen, 4 hydrogen atoms from delta-L-(alpha-aminoadipyl)-L-cysteinyl-D-valine (ACV) to form the azetidinone and thiazolidine rings of isopenicillin. This Flavobacterium sp. (strain SC 12,154) protein is Isopenicillin N synthase (pcbC).